Consider the following 874-residue polypeptide: Pyruvate, phosphate dikinase (874 aa).

Positions 2 to 340 (AKWVYKFEEG…LYFLQTRNGK (339 aa)) are N-terminal. Position 92 (R92) interacts with ATP. The segment at 340-399 (KRTAPAALQIACDLVDEGMITEEEAVVRIEAKSLDQLLHPTFNPAALKAGEVIGSALPAS) is linker 1. Residues 400–498 (PGAAAGKVYF…TFAEGDYISL (99 aa)) are central. At T453 the chain carries Phosphothreonine; by PDRP1. Residue H455 is the Tele-phosphohistidine intermediate of the active site. Residues 499–533 (DGSTGKIYKGDIETQEASVSGSFERIMVWADKFRT) form a linker 2 region. The tract at residues 534-874 (LKVRTNADTP…AAAQAALNNK (341 aa)) is C-terminal. The substrate site is built by R561, R617, E745, G766, T767, N768, and D769. Mg(2+) is bound at residue E745. D769 provides a ligand contact to Mg(2+). Residue C831 is the Proton donor of the active site.

It belongs to the PEP-utilizing enzyme family. In terms of assembly, homodimer. Mg(2+) is required as a cofactor. Post-translationally, phosphorylation of Thr-453 in the dark inactivates the enzyme. Dephosphorylation upon light stimulation reactivates the enzyme.

The enzyme catalyses pyruvate + phosphate + ATP = phosphoenolpyruvate + AMP + diphosphate + H(+). Its activity is regulated as follows. Activated by light-induced dephosphorylation. Inhibited by dark-induced phosphorylation. Both reactions are catalyzed by PDRP1. Its function is as follows. Catalyzes the reversible phosphorylation of pyruvate and phosphate. In E.histolytica and C.symbiosus, PPDK functions in the direction of ATP synthesis. The chain is Pyruvate, phosphate dikinase (ppdK) from Clostridium symbiosum (Bacteroides symbiosus).